We begin with the raw amino-acid sequence, 251 residues long: Copper transport protein CTR1 (251 aa).

The helical transmembrane segment at 90–110 threads the bilayer; the sequence is AFGIFVLLFFVAFLARMLEFV. The span at 157–173 shows a compositional bias: basic and acidic residues; sequence DESIDKQNSPQHEETTK. Residues 157 to 176 are disordered; sequence DESIDKQNSPQHEETTKARG. The chain crosses the membrane as a helical span at residues 208-228; that stretch reads MLAAMTYTLTYFFAVVIGSGV.

Oligomer.

It is found in the cell membrane. In terms of biological role, required for high affinity copper (probably reduced Cu I) transport into the cell. In Candida albicans (strain SC5314 / ATCC MYA-2876) (Yeast), this protein is Copper transport protein CTR1 (CTR1).